A 328-amino-acid chain; its full sequence is Beta-ketoacyl-[acyl-carrier-protein] synthase III (328 aa).

Active-site residues include cysteine 122 and histidine 255. The tract at residues 256–260 (QANVR) is ACP-binding. Asparagine 285 is an active-site residue.

It belongs to the thiolase-like superfamily. FabH family. As to quaternary structure, homodimer.

It localises to the cytoplasm. The enzyme catalyses malonyl-[ACP] + acetyl-CoA + H(+) = 3-oxobutanoyl-[ACP] + CO2 + CoA. It functions in the pathway lipid metabolism; fatty acid biosynthesis. In terms of biological role, catalyzes the condensation reaction of fatty acid synthesis by the addition to an acyl acceptor of two carbons from malonyl-ACP. Catalyzes the first condensation reaction which initiates fatty acid synthesis and may therefore play a role in governing the total rate of fatty acid production. Possesses both acetoacetyl-ACP synthase and acetyl transacylase activities. Its substrate specificity determines the biosynthesis of branched-chain and/or straight-chain of fatty acids. This chain is Beta-ketoacyl-[acyl-carrier-protein] synthase III, found in Bordetella avium (strain 197N).